Consider the following 194-residue polypeptide: Small ribosomal subunit protein eS7 (194 aa).

It belongs to the eukaryotic ribosomal protein eS7 family.

The polypeptide is Small ribosomal subunit protein eS7 (rps-7) (Caenorhabditis elegans).